The following is a 483-amino-acid chain: Glycogen synthase (483 aa).

Lysine 15 lines the ADP-alpha-D-glucose pocket.

Belongs to the glycosyltransferase 1 family. Bacterial/plant glycogen synthase subfamily.

It carries out the reaction [(1-&gt;4)-alpha-D-glucosyl](n) + ADP-alpha-D-glucose = [(1-&gt;4)-alpha-D-glucosyl](n+1) + ADP + H(+). The protein operates within glycan biosynthesis; glycogen biosynthesis. In terms of biological role, synthesizes alpha-1,4-glucan chains using ADP-glucose. This chain is Glycogen synthase, found in Thioalkalivibrio sulfidiphilus (strain HL-EbGR7).